Here is a 685-residue protein sequence, read N- to C-terminus: Sorbicillinoid biosynthetic cluster transcription factor sor4 (685 aa).

Positions 1–14 are enriched in low complexity; the sequence is MGSSATATTTGEST. A disordered region spans residues 1 to 20; that stretch reads MGSSATATTTGESTRQQPGL. A DNA-binding region (zn(2)-C6 fungal-type) is located at residues 22–49; that stretch reads CEECRRRKARCDRVRPKCGICADSGRNC. The tract at residues 81-112 is disordered; it reads GQNDAPSLPQERDSLGCPTPSEKVSPEGDLVS.

The protein resides in the nucleus. Its function is as follows. Transcription factor that acts as the main regulator of the gene cluster that mediates the biosynthesis of sorbicillinoids, a diverse group of yellow secondary metabolites that restrict growth of competing pathogenic fungi but not of bacteria. The sequence is that of Sorbicillinoid biosynthetic cluster transcription factor sor4 from Hypocrea jecorina (strain QM6a) (Trichoderma reesei).